Reading from the N-terminus, the 345-residue chain is Probable RuBisCO transcriptional regulator (345 aa).

The HTH lysR-type domain occupies 6–63 (FTLDQLRILKAIASEGSFKRAADTLYVSQPAVSLQVQNLEKQLSVPLFDRGGRKAQLT). Residues 23-42 (FKRAADTLYVSQPAVSLQVQ) constitute a DNA-binding region (H-T-H motif). Positions 311 to 345 (LDPERLFANPYSSNNGDRQGDGKDGKGSIEIDSVT) are disordered. Residues 328–339 (RQGDGKDGKGSI) are compositionally biased toward basic and acidic residues.

It belongs to the LysR transcriptional regulatory family.

In terms of biological role, trans-acting transcriptional regulator of RuBisCO genes (rbcL and rbcS) expression. The chain is Probable RuBisCO transcriptional regulator (rbcR) from Synechocystis sp. (strain ATCC 27184 / PCC 6803 / Kazusa).